The chain runs to 782 residues: Coiled-coil alpha-helical rod protein 1 (782 aa).

Composition is skewed to basic and acidic residues over residues 62–74 and 208–218; these read ERDV…EPGR and ETRRAGEAKEL. 2 disordered regions span residues 62–82 and 185–218; these read ERDV…WGLE and AHKE…AKEL. Coiled coils occupy residues 82 to 314, 344 to 398, and 498 to 691; these read EGSQ…ELTR, LMVQ…EVER, and VTDV…QQEG.

It is found in the cytoplasm. Its subcellular location is the nucleus. May be a regulator of keratinocyte proliferation or differentiation. This is Coiled-coil alpha-helical rod protein 1 (CCHCR1) from Gorilla gorilla gorilla (Western lowland gorilla).